We begin with the raw amino-acid sequence, 858 residues long: Bifunctional uridylyltransferase/uridylyl-removing enzyme (858 aa).

A uridylyltransferase region spans residues 1-324; that stretch reads MSASVAEPPP…PATSGVTRVL (324 aa). The tract at residues 325–681 is uridylyl-removing; that stretch reads SPGRFVEKQG…ARPSPVGDAL (357 aa). The HD domain maps to 443 to 565; the sequence is VDQHILMVLR…VGSERRLTAL (123 aa). ACT domains lie at 682 to 761 and 790 to 858; these read QVLV…PEPS and ILSV…AIAV.

It belongs to the GlnD family. Requires Mg(2+) as cofactor.

The catalysed reaction is [protein-PII]-L-tyrosine + UTP = [protein-PII]-uridylyl-L-tyrosine + diphosphate. It catalyses the reaction [protein-PII]-uridylyl-L-tyrosine + H2O = [protein-PII]-L-tyrosine + UMP + H(+). With respect to regulation, uridylyltransferase (UTase) activity is inhibited by glutamine, while glutamine activates uridylyl-removing (UR) activity. Its function is as follows. Modifies, by uridylylation and deuridylylation, the PII regulatory proteins (GlnB and homologs), in response to the nitrogen status of the cell that GlnD senses through the glutamine level. Under low glutamine levels, catalyzes the conversion of the PII proteins and UTP to PII-UMP and PPi, while under higher glutamine levels, GlnD hydrolyzes PII-UMP to PII and UMP (deuridylylation). Thus, controls uridylylation state and activity of the PII proteins, and plays an important role in the regulation of nitrogen assimilation and metabolism. This chain is Bifunctional uridylyltransferase/uridylyl-removing enzyme, found in Burkholderia mallei (strain ATCC 23344).